A 127-amino-acid chain; its full sequence is Large ribosomal subunit protein bL12 (127 aa).

The segment at 94–114 is disordered; it reads VDGAPSTLKEAASKEEAEEAK. A compositionally biased stretch (basic and acidic residues) spans 104-114; it reads AASKEEAEEAK.

This sequence belongs to the bacterial ribosomal protein bL12 family. In terms of assembly, homodimer. Part of the ribosomal stalk of the 50S ribosomal subunit. Forms a multimeric L10(L12)X complex, where L10 forms an elongated spine to which 2 to 4 L12 dimers bind in a sequential fashion. Binds GTP-bound translation factors.

Functionally, forms part of the ribosomal stalk which helps the ribosome interact with GTP-bound translation factors. Is thus essential for accurate translation. The polypeptide is Large ribosomal subunit protein bL12 (Nitratidesulfovibrio vulgaris (strain ATCC 29579 / DSM 644 / CCUG 34227 / NCIMB 8303 / VKM B-1760 / Hildenborough) (Desulfovibrio vulgaris)).